The following is a 504-amino-acid chain: Cytochrome P450 4A25 (504 aa).

Transmembrane regions (helical) follow at residues 6–26 (LASA…LLLL) and 110–130 (APVL…LLNG). Cys451 is a heme binding site.

The protein belongs to the cytochrome P450 family. The cofactor is heme.

Its subcellular location is the endoplasmic reticulum membrane. It carries out the reaction an omega-methyl-long-chain fatty acid + reduced [NADPH--hemoprotein reductase] + O2 = an omega-hydroxy-long-chain fatty acid + oxidized [NADPH--hemoprotein reductase] + H2O + H(+). Functionally, catalyzes the omega- and (omega-1)-hydroxylation of various fatty acids such as laurate and palmitate. Has no activity toward taurochenodeoxycholic acid. The polypeptide is Cytochrome P450 4A25 (CYP4A25) (Sus scrofa (Pig)).